A 274-amino-acid polypeptide reads, in one-letter code: Diaminopimelate epimerase (274 aa).

Residues Asn11, Gln44, and Asn64 each coordinate substrate. Residue Cys73 is the Proton donor of the active site. Substrate-binding positions include 74 to 75, Asn157, Asn190, and 208 to 209; these read GN and ER. Catalysis depends on Cys217, which acts as the Proton acceptor. A substrate-binding site is contributed by 218–219; it reads GS.

Belongs to the diaminopimelate epimerase family. As to quaternary structure, homodimer.

The protein localises to the cytoplasm. It carries out the reaction (2S,6S)-2,6-diaminopimelate = meso-2,6-diaminopimelate. The protein operates within amino-acid biosynthesis; L-lysine biosynthesis via DAP pathway; DL-2,6-diaminopimelate from LL-2,6-diaminopimelate: step 1/1. Catalyzes the stereoinversion of LL-2,6-diaminopimelate (L,L-DAP) to meso-diaminopimelate (meso-DAP), a precursor of L-lysine and an essential component of the bacterial peptidoglycan. The protein is Diaminopimelate epimerase of Edwardsiella ictaluri (strain 93-146).